Reading from the N-terminus, the 236-residue chain is UPF0257 lipoprotein YnfC (236 aa).

The N-terminal stretch at 1 to 16 (MKKPLLLTLLCMILAG) is a signal peptide. Cys-17 carries the N-palmitoyl cysteine lipid modification. Cys-17 carries the S-diacylglycerol cysteine lipid modification.

The protein belongs to the UPF0257 family.

It localises to the cell membrane. This chain is UPF0257 lipoprotein YnfC, found in Salmonella heidelberg (strain SL476).